The sequence spans 247 residues: MPKRDAPWRLMAGTSKVSRSANYSPRGSLPKRDAWVNRPMYRKPRIYRSLRGPDVPKGCEGPCKVQSYEQRHDISLVGKVMCISDVTRGNGITHRVGKRFCVKSVYILGKIWMDENIKLKNHTNSVMFWLVRDRRPYGTPMDFGQVFNMFDNEPSTATVKNDLRDRFQVIHRFHAKVTGGQYASNEQALVRRFWKVNNNVVYNHQEAGKYENHTENALLLYMACTHASNPVYATLKIRIYFYDSITN.

The Bipartite nuclear localization signal signature appears at 3-20; the sequence is KRDAPWRLMAGTSKVSRS. The Nuclear localization signal signature appears at 31 to 45; it reads KRDAWVNRPMYRKPR. A Nuclear export signal motif is present at residues 92–113; the sequence is ITHRVGKRFCVKSVYILGKIWM. The short motif at 191–238 is the Bipartite nuclear localization signal element; the sequence is RRFWKVNNNVVYNHQEAGKYENHTENALLLYMACTHASNPVYATLKIR.

This sequence belongs to the geminiviridae capsid protein family. Homomultimer. Binds to single-stranded and double-stranded viral DNA. Interacts (via nuclear localization signals) with host importin alpha-1a.

It is found in the virion. Its subcellular location is the host nucleus. In terms of biological role, encapsidates the viral DNA into characteristic twinned ('geminate') particles. Binds the genomic viral ssDNA and shuttles it into and out of the cell nucleus. The CP of bipartite geminiviruses is not required for cell-to-cell or systemic movement. The protein is Capsid protein of Solanum lycopersicum (Tomato).